A 510-amino-acid chain; its full sequence is Probable cytosol aminopeptidase (510 aa).

The Mn(2+) site is built by lysine 254 and aspartate 259. Lysine 266 is a catalytic residue. Mn(2+) is bound by residues aspartate 277, aspartate 336, and glutamate 338. Arginine 340 is an active-site residue. Residues 487 to 510 (AQPVKASPKTRPARKSTPAAKTRA) form a disordered region.

It belongs to the peptidase M17 family. Requires Mn(2+) as cofactor.

The protein localises to the cytoplasm. The enzyme catalyses Release of an N-terminal amino acid, Xaa-|-Yaa-, in which Xaa is preferably Leu, but may be other amino acids including Pro although not Arg or Lys, and Yaa may be Pro. Amino acid amides and methyl esters are also readily hydrolyzed, but rates on arylamides are exceedingly low.. It catalyses the reaction Release of an N-terminal amino acid, preferentially leucine, but not glutamic or aspartic acids.. Presumably involved in the processing and regular turnover of intracellular proteins. Catalyzes the removal of unsubstituted N-terminal amino acids from various peptides. This is Probable cytosol aminopeptidase from Polaromonas naphthalenivorans (strain CJ2).